Consider the following 77-residue polypeptide: Pollen allergen Amb p 5a (77 aa).

The N-terminal stretch at 1–22 is a signal peptide; it reads MNNEKNVSFEFIGSTDEVDEIK. Cystine bridges form between cysteine 26–cysteine 61, cysteine 33–cysteine 48, cysteine 40–cysteine 54, and cysteine 41–cysteine 65.

In Ambrosia psilostachya (Western ragweed), this protein is Pollen allergen Amb p 5a.